The sequence spans 434 residues: Putative magnesium transporter MRS2-D (434 aa).

Disordered stretches follow at residues Ala-126–Ala-171 and Glu-279–Gly-311. Residues Glu-279 to Glu-291 are compositionally biased toward basic and acidic residues. The next 2 membrane-spanning stretches (helical) occupy residues Gly-367–Phe-387 and Phe-405–Leu-425.

It belongs to the CorA metal ion transporter (MIT) (TC 1.A.35.5) family.

It is found in the membrane. Putative magnesium transporter. The polypeptide is Putative magnesium transporter MRS2-D (MRS2-D) (Oryza sativa subsp. japonica (Rice)).